The following is a 282-amino-acid chain: Benzoyl-CoA reductase subunit D (282 aa).

Positions 130 and 169 each coordinate [4Fe-4S] cluster.

As to quaternary structure, heterotetramer composed of A, B, C, and D subunits. The cofactor is [4Fe-4S] cluster.

It carries out the reaction cyclohexa-1,5-diene-1-carbonyl-CoA + oxidized 2[4Fe-4S]-[ferredoxin] + 2 ADP + 2 phosphate = reduced 2[4Fe-4S]-[ferredoxin] + benzoyl-CoA + 2 ATP + 2 H2O. It catalyses the reaction 3-hydroxybenzoyl-CoA + AH2 + 2 ATP + 2 H2O = 3-hydroxycyclohexa-1,5-diene-1-carbonyl-CoA + A + 2 ADP + 2 phosphate + 2 H(+). Functionally, catalyzes the anaerobic reduction of benzoyl-CoA and 3-hydroxybenzoyl-CoA to form cyclohexa-1,5-diene-1-carbonyl-CoA and 3-hydroxycyclohexa-1,5-diene-1-carbonyl-CoA, respectively. The enzyme also reduces other benzoyl-CoA analogs with small substituents at the aromatic ring. In Thauera aromatica, this protein is Benzoyl-CoA reductase subunit D (bcrD).